Consider the following 241-residue polypeptide: UDP-2,3-diacylglucosamine hydrolase (241 aa).

Mn(2+)-binding residues include Asp8, His10, Asp41, Asn79, and His114. 79-80 (NR) lines the substrate pocket. 5 residues coordinate substrate: Asp122, Ser160, Asn164, Lys167, and His195. Mn(2+)-binding residues include His195 and His197.

This sequence belongs to the LpxH family. Requires Mn(2+) as cofactor.

Its subcellular location is the cell inner membrane. It carries out the reaction UDP-2-N,3-O-bis[(3R)-3-hydroxytetradecanoyl]-alpha-D-glucosamine + H2O = 2-N,3-O-bis[(3R)-3-hydroxytetradecanoyl]-alpha-D-glucosaminyl 1-phosphate + UMP + 2 H(+). The protein operates within glycolipid biosynthesis; lipid IV(A) biosynthesis; lipid IV(A) from (3R)-3-hydroxytetradecanoyl-[acyl-carrier-protein] and UDP-N-acetyl-alpha-D-glucosamine: step 4/6. Its function is as follows. Hydrolyzes the pyrophosphate bond of UDP-2,3-diacylglucosamine to yield 2,3-diacylglucosamine 1-phosphate (lipid X) and UMP by catalyzing the attack of water at the alpha-P atom. Involved in the biosynthesis of lipid A, a phosphorylated glycolipid that anchors the lipopolysaccharide to the outer membrane of the cell. The protein is UDP-2,3-diacylglucosamine hydrolase of Aeromonas hydrophila subsp. hydrophila (strain ATCC 7966 / DSM 30187 / BCRC 13018 / CCUG 14551 / JCM 1027 / KCTC 2358 / NCIMB 9240 / NCTC 8049).